A 157-amino-acid chain; its full sequence is MILGMGTDLCMISRIEKSVERFGDRFLNRVFTEAERAYADRFTGAARMGSYAKRWAAKEACAKALGTGFANGVLLQDIGVCNGPGGAPELLLSGGAEEALKRLTPSGQEAQLLVSMSDDPPFALAQVIIQSVPLAGVQSAPQASVRIEPLANAAKLR.

Residues D8 and E59 each coordinate Mg(2+).

This sequence belongs to the P-Pant transferase superfamily. AcpS family. The cofactor is Mg(2+).

The protein localises to the cytoplasm. It carries out the reaction apo-[ACP] + CoA = holo-[ACP] + adenosine 3',5'-bisphosphate + H(+). In terms of biological role, transfers the 4'-phosphopantetheine moiety from coenzyme A to a Ser of acyl-carrier-protein. This chain is Holo-[acyl-carrier-protein] synthase, found in Gluconobacter oxydans (strain 621H) (Gluconobacter suboxydans).